A 568-amino-acid chain; its full sequence is Oxygen-dependent choline dehydrogenase (568 aa).

8-37 (DYVIIGGGSAGSVLGNRLTEDKDKEVLVLE) is an FAD binding site. The active-site Proton acceptor is His-473.

This sequence belongs to the GMC oxidoreductase family. FAD is required as a cofactor.

The catalysed reaction is choline + A = betaine aldehyde + AH2. The enzyme catalyses betaine aldehyde + NAD(+) + H2O = glycine betaine + NADH + 2 H(+). The protein operates within amine and polyamine biosynthesis; betaine biosynthesis via choline pathway; betaine aldehyde from choline (cytochrome c reductase route): step 1/1. In terms of biological role, involved in the biosynthesis of the osmoprotectant glycine betaine. Catalyzes the oxidation of choline to betaine aldehyde and betaine aldehyde to glycine betaine at the same rate. In Staphylococcus haemolyticus (strain JCSC1435), this protein is Oxygen-dependent choline dehydrogenase.